Consider the following 152-residue polypeptide: MGLEKSLFLFSLLVLVLGWVQPSLGVESRETPAQKFERQHMDEEGPFPSSPTYCNEMMKSRGMTSGWCKSMNTFVHEPLATVQAICSQGQVTCKNGRNNCHKSSSTLRITDCRLKGSSKYPNCDYTTTNSQKHIIIACEGNPLVPVHFDDSV.

The first 25 residues, 1–25, serve as a signal peptide directing secretion; sequence MGLEKSLFLFSLLVLVLGWVQPSLG. Residues K35 and R38 each coordinate substrate. H40 serves as the catalytic Proton acceptor. Disulfide bonds link C54/C112, C68/C123, C86/C138, and C93/C100. Substrate-binding positions include 69–73, K94, and R113; that span reads KSMNT. H147 (proton donor) is an active-site residue.

This sequence belongs to the pancreatic ribonuclease family. Monomer.

The protein localises to the secreted. The enzyme catalyses an [RNA] containing cytidine + H2O = an [RNA]-3'-cytidine-3'-phosphate + a 5'-hydroxy-ribonucleotide-3'-[RNA].. The catalysed reaction is an [RNA] containing uridine + H2O = an [RNA]-3'-uridine-3'-phosphate + a 5'-hydroxy-ribonucleotide-3'-[RNA].. Endonuclease that catalyzes the cleavage of RNA on the 3' side of pyrimidine nucleotides. Acts on single-stranded and double-stranded RNA. The sequence is that of Ribonuclease pancreatic gamma-type from Rattus norvegicus (Rat).